Reading from the N-terminus, the 610-residue chain is C4b-binding protein alpha chain (610 aa).

A signal peptide spans 1–48; it reads MKHQRVPVMILHSKGTMASWPFSRLWSISDPILFQVTLVATLLATVLG. Sushi domains follow at residues 49 to 109, 110 to 171, 172 to 236, 237 to 296, 297 to 364, 365 to 427, 428 to 485, and 486 to 543; these read SCGI…FCVK, KRCE…QCII, AKCE…SCKK, VICV…TCEL, NGCL…ECKE, VCCP…ECRP, DCKS…QCKA, and LCLK…KCEW. Disulfide bonds link Cys50–Cys95, Cys80–Cys107, Cys112–Cys153, Cys139–Cys169, Cys174–Cys217, Cys203–Cys234, Cys239–Cys281, Cys267–Cys294, Cys299–Cys350, Cys334–Cys362, Cys367–Cys412, Cys402–Cys425, Cys429–Cys471, Cys457–Cys483, Cys487–Cys528, and Cys514–Cys541. N-linked (GlcNAc...) asparagine glycosylation occurs at Asn66. Asn221 carries an N-linked (GlcNAc...) asparagine glycan. N-linked (GlcNAc...) asparagine glycosylation is found at Asn525 and Asn602.

In terms of assembly, disulfide-linked complex of alpha and beta chains.

It is found in the secreted. Functionally, controls the classical pathway of complement activation. It binds as a cofactor to C3b/C4b inactivator (C3bINA), which then hydrolyzes the complement fragment C4b. It also accelerates the degradation of the C4bC2a complex (C3 convertase) by dissociating the complement fragment C2a. Alpha chain binds C4b. It also interacts with serum amyloid P component. This is C4b-binding protein alpha chain (C4BPA) from Bos taurus (Bovine).